Consider the following 337-residue polypeptide: CMRF35-like molecule 1 (337 aa).

The N-terminal stretch at 1 to 19 (MHLSLLVPFLFWITGCCTA) is a signal peptide. The Ig-like V-type domain occupies 20–125 (EDPVTGPEEV…LDPMFKVTVN (106 aa)). Topologically, residues 20–193 (EDPVTGPEEV…GVGDGFLDLS (174 aa)) are extracellular. The plays an important role in murine norovirus (MNV) binding stretch occupies residues 39-45 (VQCRYTS). 2 disulfides stabilise this stretch: cysteine 41-cysteine 109 and cysteine 55-cysteine 63. A helical membrane pass occupies residues 194–214 (VLLPVISAVLLLLLLVASLFA). Residues 215 to 337 (WRMVRRQKKA…IRRPLPAAMP (123 aa)) lie on the Cytoplasmic side of the membrane. Disordered regions lie at residues 248–270 (QPRTSPGSSWKKGSSMSSSGKDH) and 318–337 (LEEETTEYSSIRRPLPAAMP). Residues 252–266 (SPGSSWKKGSSMSSS) are compositionally biased toward low complexity.

It belongs to the CD300 family. In terms of assembly, interacts with PTPN6/SHP-1 in a tyrosine phosphorylation dependent manner. Interacts with IL4R. Phosphorylated on tyrosine. In terms of tissue distribution, expressed in myeloid cells. Present on the surface of macrophages (at protein level). Highly expressed by alveolar, splenic macrophages and bone marrow-derived dendritic cells. Expression is increased following aeroallergen challenge in macrophages, mast cells, and eosinophils.

Its subcellular location is the cell membrane. In terms of biological role, acts as an inhibitory receptor for myeloid cells and mast cells. Positively regulates the phagocytosis of apoptotic cells (efferocytosis) via phosphatidylserine (PS) recognition; recognizes and binds PS as a ligand which is expressed on the surface of apoptotic cells. Plays an important role in the maintenance of immune homeostasis, by promoting macrophage-mediated efferocytosis and by inhibiting dendritic cell-mediated efferocytosis. Negatively regulates Fc epsilon receptor-dependent mast cell activation and allergic responses via binding to ceramide which acts as a ligand. May act as a coreceptor for interleukin 4 (IL-4). Associates with and regulates IL-4 receptor alpha-mediated responses by augmenting IL-4- and IL-13-induced signaling. Negatively regulates the Toll-like receptor (TLR) signaling mediated by MYD88 and TRIF through activation of PTPN6/SHP-1 and PTPN11/SHP-2. Inhibits osteoclast formation. Induces macrophage cell death upon engagement. Functionally, (Microbial infection) Acts as a functional receptor for murine norovirus (MNV). Mediates binding to the cell surface and is both necessary and sufficient for viral entry and replication. This interaction requires Mg(2+) and Ca(2+) and is enhanced by bile acids. Primary determinant of MNV species tropism and is sufficient to render cells permissive to infection by MNV. Can render nonmurine mammalian cells susceptible to MNV infection. This is CMRF35-like molecule 1 (Cd300lf) from Mus musculus (Mouse).